The sequence spans 183 residues: ATP synthase subunit delta (183 aa).

Belongs to the ATPase delta chain family. In terms of assembly, F-type ATPases have 2 components, F(1) - the catalytic core - and F(0) - the membrane proton channel. F(1) has five subunits: alpha(3), beta(3), gamma(1), delta(1), epsilon(1). F(0) has three main subunits: a(1), b(2) and c(10-14). The alpha and beta chains form an alternating ring which encloses part of the gamma chain. F(1) is attached to F(0) by a central stalk formed by the gamma and epsilon chains, while a peripheral stalk is formed by the delta and b chains.

The protein localises to the cell inner membrane. In terms of biological role, f(1)F(0) ATP synthase produces ATP from ADP in the presence of a proton or sodium gradient. F-type ATPases consist of two structural domains, F(1) containing the extramembraneous catalytic core and F(0) containing the membrane proton channel, linked together by a central stalk and a peripheral stalk. During catalysis, ATP synthesis in the catalytic domain of F(1) is coupled via a rotary mechanism of the central stalk subunits to proton translocation. Functionally, this protein is part of the stalk that links CF(0) to CF(1). It either transmits conformational changes from CF(0) to CF(1) or is implicated in proton conduction. This chain is ATP synthase subunit delta, found in Desulfatibacillum aliphaticivorans.